The primary structure comprises 271 residues: uncharacterized protein (271 aa).

Belongs to the HAD-like hydrolase superfamily.

This is an uncharacterized protein from Staphylococcus aureus (strain NCTC 8325 / PS 47).